The sequence spans 200 residues: MSERIEKIMTVGITGASGGMYGVRLTQELLRQEYKVHLVLTEAAWQVFKEELLLDTTDRQKVIHELFGDLPGELHTHDLHDYAAPIASGSYRSAGMVIIPCSMGTLSGMAHGASGNLLERTADVMLKEKRKLVIVPRETPLHDIHLENMLKLSKMGATILPAMPGYYHLPKTIDDLINFLVGKALDSLGVEHTLFTRWGE.

FMN is bound by residues 15-17, Thr41, 102-105, and Arg137; these read GAS and SMGT. 2 residues coordinate dimethylallyl phosphate: Tyr167 and Lys183.

The protein belongs to the UbiX/PAD1 family.

The catalysed reaction is dimethylallyl phosphate + FMNH2 = prenylated FMNH2 + phosphate. Flavin prenyltransferase that catalyzes the synthesis of the prenylated FMN cofactor (prenyl-FMN) for 4-hydroxy-3-polyprenylbenzoic acid decarboxylase UbiD. The prenyltransferase is metal-independent and links a dimethylallyl moiety from dimethylallyl monophosphate (DMAP) to the flavin N5 and C6 atoms of FMN. This is Flavin prenyltransferase UbiX from Alkalihalophilus pseudofirmus (strain ATCC BAA-2126 / JCM 17055 / OF4) (Bacillus pseudofirmus).